The sequence spans 272 residues: Undecaprenyl-diphosphatase (272 aa).

The next 8 membrane-spanning stretches (helical) occupy residues 4 to 24, 45 to 65, 89 to 109, 115 to 135, 152 to 174, 189 to 209, 225 to 245, and 251 to 271; these read IHSL…EFLP, AETF…VMFW, LTLG…LVFH, LFNP…LIAA, TYRQ…FSRS, YAAS…ATAL, MFAV…KTFL, and ISFI…YVVF.

Belongs to the UppP family.

The protein localises to the cell inner membrane. The enzyme catalyses di-trans,octa-cis-undecaprenyl diphosphate + H2O = di-trans,octa-cis-undecaprenyl phosphate + phosphate + H(+). Its function is as follows. Catalyzes the dephosphorylation of undecaprenyl diphosphate (UPP). Confers resistance to bacitracin. This is Undecaprenyl-diphosphatase from Citrobacter koseri (strain ATCC BAA-895 / CDC 4225-83 / SGSC4696).